Consider the following 273-residue polypeptide: Ribosomal RNA small subunit methyltransferase A (273 aa).

The S-adenosyl-L-methionine site is built by Asn18, Leu20, Gly45, Glu66, Asp91, and Asn113.

This sequence belongs to the class I-like SAM-binding methyltransferase superfamily. rRNA adenine N(6)-methyltransferase family. RsmA subfamily.

The protein resides in the cytoplasm. It catalyses the reaction adenosine(1518)/adenosine(1519) in 16S rRNA + 4 S-adenosyl-L-methionine = N(6)-dimethyladenosine(1518)/N(6)-dimethyladenosine(1519) in 16S rRNA + 4 S-adenosyl-L-homocysteine + 4 H(+). Its function is as follows. Specifically dimethylates two adjacent adenosines (A1518 and A1519) in the loop of a conserved hairpin near the 3'-end of 16S rRNA in the 30S particle. May play a critical role in biogenesis of 30S subunits. The polypeptide is Ribosomal RNA small subunit methyltransferase A (Shigella boydii serotype 18 (strain CDC 3083-94 / BS512)).